A 415-amino-acid chain; its full sequence is MMQAAWQEISGGLTAPRGFQAAGITAGLKASGQPDLALIVSESDAIAAAVFTTSQVRAACVDFSRQQLDGNSIARAILCNSGQANAATGDQGWSDAVESAEQLAQALQIPSHQVLVASTGVIGQRIKMEALRTGIPQAIAALSPEGGPAAAQAILTTDLVAKQIALELPLGDRTVRIGGIAKGSGMIHPNMATMLSFITCDAAVSPQLWQEMLSRAVDRSFNQITVDGDTSTNDCVFALANGQSRTPAITERGPIADQLEAMLTAVCQHLAKAIARDGEGATCLIEVQVKGTADDAAARAIARTIAGSSLVKSAIFGRDPNWGRIAAAAGRAGVQFNSENLGVRLGEFELLRNGQPLPFDRNAASQYLRDRAAGAYLQDDTVLIQVDVGAGTGQGVAWGCDLSYDYVRINAEYTT.

Substrate is bound by residues Thr156, Lys182, Thr193, Glu279, Asn410, and Thr415. Catalysis depends on Thr193, which acts as the Nucleophile.

This sequence belongs to the ArgJ family. Heterotetramer of two alpha and two beta chains.

It is found in the cytoplasm. The catalysed reaction is N(2)-acetyl-L-ornithine + L-glutamate = N-acetyl-L-glutamate + L-ornithine. The enzyme catalyses L-glutamate + acetyl-CoA = N-acetyl-L-glutamate + CoA + H(+). It functions in the pathway amino-acid biosynthesis; L-arginine biosynthesis; L-ornithine and N-acetyl-L-glutamate from L-glutamate and N(2)-acetyl-L-ornithine (cyclic): step 1/1. The protein operates within amino-acid biosynthesis; L-arginine biosynthesis; N(2)-acetyl-L-ornithine from L-glutamate: step 1/4. In terms of biological role, catalyzes two activities which are involved in the cyclic version of arginine biosynthesis: the synthesis of N-acetylglutamate from glutamate and acetyl-CoA as the acetyl donor, and of ornithine by transacetylation between N(2)-acetylornithine and glutamate. The sequence is that of Arginine biosynthesis bifunctional protein ArgJ from Synechococcus sp. (strain ATCC 27144 / PCC 6301 / SAUG 1402/1) (Anacystis nidulans).